Reading from the N-terminus, the 233-residue chain is Phosphoribosylformylglycinamidine synthase subunit PurQ (233 aa).

Residues A3–A233 form the Glutamine amidotransferase type-1 domain. C87 acts as the Nucleophile in catalysis. Active-site residues include H204 and E206.

In terms of assembly, part of the FGAM synthase complex composed of 1 PurL, 1 PurQ and 2 PurS subunits.

It localises to the cytoplasm. The catalysed reaction is N(2)-formyl-N(1)-(5-phospho-beta-D-ribosyl)glycinamide + L-glutamine + ATP + H2O = 2-formamido-N(1)-(5-O-phospho-beta-D-ribosyl)acetamidine + L-glutamate + ADP + phosphate + H(+). It carries out the reaction L-glutamine + H2O = L-glutamate + NH4(+). The protein operates within purine metabolism; IMP biosynthesis via de novo pathway; 5-amino-1-(5-phospho-D-ribosyl)imidazole from N(2)-formyl-N(1)-(5-phospho-D-ribosyl)glycinamide: step 1/2. Part of the phosphoribosylformylglycinamidine synthase complex involved in the purines biosynthetic pathway. Catalyzes the ATP-dependent conversion of formylglycinamide ribonucleotide (FGAR) and glutamine to yield formylglycinamidine ribonucleotide (FGAM) and glutamate. The FGAM synthase complex is composed of three subunits. PurQ produces an ammonia molecule by converting glutamine to glutamate. PurL transfers the ammonia molecule to FGAR to form FGAM in an ATP-dependent manner. PurS interacts with PurQ and PurL and is thought to assist in the transfer of the ammonia molecule from PurQ to PurL. The protein is Phosphoribosylformylglycinamidine synthase subunit PurQ of Bradyrhizobium diazoefficiens (strain JCM 10833 / BCRC 13528 / IAM 13628 / NBRC 14792 / USDA 110).